Here is a 90-residue protein sequence, read N- to C-terminus: Auxin-responsive protein SAUR24 (90 aa).

Belongs to the ARG7 family.

Its subcellular location is the cell membrane. Functionally, functions as a positive effector of cell expansion through modulation of auxin transport. This Arabidopsis thaliana (Mouse-ear cress) protein is Auxin-responsive protein SAUR24.